A 664-amino-acid chain; its full sequence is Macoilin (664 aa).

The next 4 membrane-spanning stretches (helical) occupy residues T28–L48, A75–I95, V120–F140, and F154–V174. The span at R253–K265 shows a compositional bias: basic and acidic residues. The segment at R253–N274 is disordered. Residue S305 is modified to Phosphoserine. Positions K320–S348 are enriched in polar residues. Residues K320–N375 form a disordered region. N-linked (GlcNAc...) asparagine glycosylation occurs at N324. Position 332 is a phosphoserine (S332). N-linked (GlcNAc...) asparagine glycans are attached at residues N340 and N452. The tract at residues T630–K664 is disordered. S631 and S634 each carry phosphoserine. N655 is a glycosylation site (N-linked (GlcNAc...) asparagine).

The protein belongs to the macoilin family.

It localises to the rough endoplasmic reticulum membrane. The protein resides in the nucleus membrane. Plays a role in the regulation of neuronal activity. The polypeptide is Macoilin (MACO1) (Canis lupus familiaris (Dog)).